The chain runs to 138 residues: Large ribosomal subunit protein bL17 (138 aa).

The protein belongs to the bacterial ribosomal protein bL17 family. Part of the 50S ribosomal subunit. Contacts protein L32.

This chain is Large ribosomal subunit protein bL17, found in Nitrobacter hamburgensis (strain DSM 10229 / NCIMB 13809 / X14).